The primary structure comprises 930 residues: Polypeptide N-acetylgalactosaminyltransferase 5 (930 aa).

The Cytoplasmic portion of the chain corresponds to 1-12 (MNKIRKFFRGSG). The chain crosses the membrane as a helical; Signal-anchor for type II membrane protein span at residues 13 to 35 (RVLAFIFAASVIWLLFDMAALRL). The Lumenal segment spans residues 36–930 (SFSEINAGLL…KWKFEKYYEV (895 aa)). The tract at residues 190–209 (KQEAPQNYNVSSDTSKQASE) is disordered. A compositionally biased stretch (polar residues) spans 193–209 (APQNYNVSSDTSKQASE). 3 N-linked (GlcNAc...) asparagine glycosylation sites follow: Asn198, Asn213, and Asn283. Ser285 bears the Phosphoserine mark. Residues Asn287, Asn309, Asn355, and Asn387 are each glycosylated (N-linked (GlcNAc...) asparagine). Residues 327–381 (DTKEVPNSKTQTVFPKLLGGSPHKQIPRNQSKTSSSPPALKKAVSQSKPTISGGL) are disordered. Residues 353–363 (PRNQSKTSSSP) are compositionally biased toward polar residues. 3 cysteine pairs are disulfide-bonded: Cys476–Cys708, Cys699–Cys779, and Cys812–Cys825. The interval 485–594 (LPTTSIIMCF…VGWLEPLLER (110 aa)) is catalytic subdomain A. Substrate contacts are provided by Asp526 and Arg555. Residue Asn568 is glycosylated (N-linked (GlcNAc...) asparagine). A Mn(2+)-binding site is contributed by Asp578. Ser579 serves as a coordination point for substrate. Residue His580 coordinates Mn(2+). Residues 654–716 (IIRCPVMAGG…PCSRVGHIFR (63 aa)) form a catalytic subdomain B region. Residue Trp685 coordinates substrate. A Mn(2+)-binding site is contributed by His713. Residues Arg716 and Tyr721 each coordinate substrate. Residues Asn766, Asn817, and Asn835 are each glycosylated (N-linked (GlcNAc...) asparagine). Positions 794 to 925 (KAPVVRASGV…MELQQKWKFE (132 aa)) constitute a Ricin B-type lectin domain. 2 disulfide bridges follow: Cys848–Cys863 and Cys898–Cys913. A glycan (N-linked (GlcNAc...) asparagine) is linked at Asn902.

This sequence belongs to the glycosyltransferase 2 family. GalNAc-T subfamily. In terms of assembly, interacts with EXT2. Does not interact with EXT1, EXTL1 or EXTL3. Mn(2+) is required as a cofactor. In terms of tissue distribution, expressed at low level. Not expressed before E7.5 during embryogenesis. Expressed in dental mesenchyme and tongue. Accumulates in a subset of mesenchymal cells at the ventral-most portions of the 12.5 dpc maxilla and mandible underlying the dental lamina.

The protein resides in the golgi apparatus membrane. It catalyses the reaction L-seryl-[protein] + UDP-N-acetyl-alpha-D-galactosamine = a 3-O-[N-acetyl-alpha-D-galactosaminyl]-L-seryl-[protein] + UDP + H(+). The enzyme catalyses L-threonyl-[protein] + UDP-N-acetyl-alpha-D-galactosamine = a 3-O-[N-acetyl-alpha-D-galactosaminyl]-L-threonyl-[protein] + UDP + H(+). It participates in protein modification; protein glycosylation. Functionally, catalyzes the initial reaction in O-linked oligosaccharide biosynthesis, the transfer of an N-acetyl-D-galactosamine residue to a serine or threonine residue on the protein receptor. Has activity toward EA2 peptide substrate, but has a weak activity toward Muc2 or Muc1b substrates. The chain is Polypeptide N-acetylgalactosaminyltransferase 5 (Galnt5) from Mus musculus (Mouse).